A 391-amino-acid chain; its full sequence is Protein Wnt-2b (391 aa).

5 cysteine pairs are disulfide-bonded: C107–C118, C158–C166, C168–C188, C237–C251, and C239–C246. N117 carries N-linked (GlcNAc...) asparagine glycosylation. A lipid anchor (O-palmitoleoyl serine; by PORCN) is attached at S243. N283 is a glycosylation site (N-linked (GlcNAc...) asparagine). 6 disulfides stabilise this stretch: C309/C340, C325/C335, C339/C379, C355/C370, C357/C367, and C362/C363.

Belongs to the Wnt family. Forms a soluble 1:1 complex with AFM; this prevents oligomerization and is required for prolonged biological activity. The complex with AFM may represent the physiological form in body fluids. Interacts with FZD4 and FZD5. In terms of processing, palmitoleoylation is required for efficient binding to frizzled receptors. Depalmitoleoylation leads to Wnt signaling pathway inhibition. Isoform 1 is expressed in adult heart, brain, placenta, lung, prostate, testis, ovary, small intestine and colon. In the adult brain, it is mainly found in the caudate nucleus, subthalamic nucleus and thalamus. Also detected in fetal brain, lung and kidney. Isoform 2 is expressed in fetal brain, fetal lung, fetal kidney, caudate nucleus, testis and cancer cell lines.

The protein localises to the secreted. It is found in the extracellular space. Its subcellular location is the extracellular matrix. Its function is as follows. Ligand for members of the frizzled family of seven transmembrane receptors. Functions in the canonical Wnt/beta-catenin signaling pathway. Plays a redundant role in embryonic lung development. This is Protein Wnt-2b (WNT2B) from Homo sapiens (Human).